Here is a 336-residue protein sequence, read N- to C-terminus: IgLON family member 5 (336 aa).

The first 30 residues, 1–30, serve as a signal peptide directing secretion; the sequence is MPPPAPGARLRLLAAAALAGLAVISRGLLS. 3 consecutive Ig-like C2-type domains span residues 33–122, 132–217, and 218–307; these read LEFN…QPYT, PARI…VNYP, and PTIT…MRLL. Asparagine 41, asparagine 49, asparagine 67, and asparagine 137 each carry an N-linked (GlcNAc...) asparagine glycan. A disulfide bond links cysteine 54 and cysteine 112. Intrachain disulfides connect cysteine 154–cysteine 195 and cysteine 238–cysteine 291. A glycan (N-linked (GlcNAc...) asparagine) is linked at asparagine 288.

It belongs to the immunoglobulin superfamily. IgLON family.

Its subcellular location is the secreted. The chain is IgLON family member 5 (IGLON5) from Homo sapiens (Human).